We begin with the raw amino-acid sequence, 467 residues long: Glutamate--tRNA ligase (467 aa).

A 'HIGH' region motif is present at residues 9 to 19; the sequence is PSPTGFLHIGG. Residues 250–254 carry the 'KMSKS' region motif; the sequence is KLSKR. Lysine 253 serves as a coordination point for ATP.

This sequence belongs to the class-I aminoacyl-tRNA synthetase family. Glutamate--tRNA ligase type 1 subfamily. Monomer.

It localises to the cytoplasm. It carries out the reaction tRNA(Glu) + L-glutamate + ATP = L-glutamyl-tRNA(Glu) + AMP + diphosphate. In terms of biological role, catalyzes the attachment of glutamate to tRNA(Glu) in a two-step reaction: glutamate is first activated by ATP to form Glu-AMP and then transferred to the acceptor end of tRNA(Glu). The protein is Glutamate--tRNA ligase of Mesomycoplasma hyopneumoniae (strain 7448) (Mycoplasma hyopneumoniae).